The following is a 321-amino-acid chain: Lipoyl synthase (321 aa).

Residues C68, C73, C79, C94, C98, C101, and S308 each contribute to the [4Fe-4S] cluster site. Residues 80–297 enclose the Radical SAM core domain; that stretch reads FNHGTATFMI…KVLADELGFT (218 aa).

It belongs to the radical SAM superfamily. Lipoyl synthase family. [4Fe-4S] cluster is required as a cofactor.

Its subcellular location is the cytoplasm. It carries out the reaction [[Fe-S] cluster scaffold protein carrying a second [4Fe-4S](2+) cluster] + N(6)-octanoyl-L-lysyl-[protein] + 2 oxidized [2Fe-2S]-[ferredoxin] + 2 S-adenosyl-L-methionine + 4 H(+) = [[Fe-S] cluster scaffold protein] + N(6)-[(R)-dihydrolipoyl]-L-lysyl-[protein] + 4 Fe(3+) + 2 hydrogen sulfide + 2 5'-deoxyadenosine + 2 L-methionine + 2 reduced [2Fe-2S]-[ferredoxin]. Its pathway is protein modification; protein lipoylation via endogenous pathway; protein N(6)-(lipoyl)lysine from octanoyl-[acyl-carrier-protein]: step 2/2. Catalyzes the radical-mediated insertion of two sulfur atoms into the C-6 and C-8 positions of the octanoyl moiety bound to the lipoyl domains of lipoate-dependent enzymes, thereby converting the octanoylated domains into lipoylated derivatives. This Shewanella sp. (strain ANA-3) protein is Lipoyl synthase.